The chain runs to 240 residues: MKIDILTLFPEMFAPLEHSIVGKAQTKGLLEINYHNFRENAEKARHVDDEPYGGGQGMLLRAQPIFDTFDKIAAKKPRVILLDPAGQQFNQSYAEDLAQEGELIFICGHYEGYDERIKTLVTDEISLGDFILTGGELAAMTIIDATVRLIPEVIGKEASHQDDSFSSGLLEYPQYTRPYEYRGMKVPDVLLSGHHENIRLWRLEQSLRKTWERRPDLLEHYQFTQEEKQLLEKIKSEGSS.

Residues Gly-108 and 127 to 132 (LGDFIL) contribute to the S-adenosyl-L-methionine site.

This sequence belongs to the RNA methyltransferase TrmD family. In terms of assembly, homodimer.

It localises to the cytoplasm. The catalysed reaction is guanosine(37) in tRNA + S-adenosyl-L-methionine = N(1)-methylguanosine(37) in tRNA + S-adenosyl-L-homocysteine + H(+). Its function is as follows. Specifically methylates guanosine-37 in various tRNAs. The polypeptide is tRNA (guanine-N(1)-)-methyltransferase (Streptococcus mutans serotype c (strain ATCC 700610 / UA159)).